A 123-amino-acid polypeptide reads, in one-letter code: Small ribosomal subunit protein uS12 (123 aa).

The disordered stretch occupies residues 11-32 (PRQEKTYREKARHLGASPQKRG). Asp-89 is subject to 3-methylthioaspartic acid.

This sequence belongs to the universal ribosomal protein uS12 family. As to quaternary structure, part of the 30S ribosomal subunit. Contacts proteins S8 and S17. May interact with IF1 in the 30S initiation complex.

With S4 and S5 plays an important role in translational accuracy. Its function is as follows. Interacts with and stabilizes bases of the 16S rRNA that are involved in tRNA selection in the A site and with the mRNA backbone. Located at the interface of the 30S and 50S subunits, it traverses the body of the 30S subunit contacting proteins on the other side and probably holding the rRNA structure together. The combined cluster of proteins S8, S12 and S17 appears to hold together the shoulder and platform of the 30S subunit. This chain is Small ribosomal subunit protein uS12, found in Methylocella silvestris (strain DSM 15510 / CIP 108128 / LMG 27833 / NCIMB 13906 / BL2).